The sequence spans 350 residues: NADH-quinone oxidoreductase subunit H (350 aa).

The next 8 membrane-spanning stretches (helical) occupy residues 31–51 (LMLLAVVGVLAFLFLNALFLI), 102–122 (LLAPVLIFTIPVMLFLVIPFG), 132–152 (LGVLYLVAITSVETIVLWMAG), 171–191 (MLSYEMPVILAMLSVVMMAGS), 205–225 (WFIFLQPVGFLIYFIAVNAEF), 263–283 (FMIGAIMVTTLFLGGWNAPFG), 286–306 (FIPSWLWFIIKMYFVITLYMW), and 322–342 (FAWKFLLPVSLANIFITGFGL).

This sequence belongs to the complex I subunit 1 family. As to quaternary structure, NDH-1 is composed of 14 different subunits. Subunits NuoA, H, J, K, L, M, N constitute the membrane sector of the complex.

It localises to the cell membrane. The catalysed reaction is a quinone + NADH + 5 H(+)(in) = a quinol + NAD(+) + 4 H(+)(out). Its function is as follows. NDH-1 shuttles electrons from NADH, via FMN and iron-sulfur (Fe-S) centers, to quinones in the respiratory chain. The immediate electron acceptor for the enzyme in this species is believed to be ubiquinone. Couples the redox reaction to proton translocation (for every two electrons transferred, four hydrogen ions are translocated across the cytoplasmic membrane), and thus conserves the redox energy in a proton gradient. This subunit may bind ubiquinone. This is NADH-quinone oxidoreductase subunit H from Carboxydothermus hydrogenoformans (strain ATCC BAA-161 / DSM 6008 / Z-2901).